We begin with the raw amino-acid sequence, 173 residues long: Tumor necrosis factor ligand superfamily member 18 (173 aa).

Over 1–20 (MEEMPLRESSPQRAERCKKS) the chain is Cytoplasmic. Residues 21-41 (WLLCIVALLLMLLCSLGTLIY) traverse the membrane as a helical; Signal-anchor for type II membrane protein segment. Residues 40–166 (IYTSLKPTAI…TNTYWGIILM (127 aa)) form the THD domain. The Extracellular portion of the chain corresponds to 42–173 (TSLKPTAIES…ILMPDLPFIS (132 aa)). Residues Cys-52 and Cys-72 are joined by a disulfide bond. Asn-74 is a glycosylation site (N-linked (GlcNAc...) asparagine).

The protein belongs to the tumor necrosis factor family. Homotrimer. Homodimer. N-glycosylated. Detected in immature and mature dendritic cells and in macrophages (at protein level). Detected in spleen, lung, heart, thymus, monocytes, macrophages, B-cells and dendritic cells.

It is found in the cell membrane. In terms of biological role, cytokine that binds to TNFRSF18/AITR/GITR. Regulates T-cell responses. Can function as costimulator and lower the threshold for T-cell activation and T-cell proliferation. Important for interactions between activated T-lymphocytes and endothelial cells. Mediates activation of NF-kappa-B. Triggers increased phosphorylation of STAT1 and up-regulates expression of VCAM1 and ICAM1. Promotes leukocyte adhesion to endothelial cells. Regulates migration of monocytes from the splenic reservoir to sites of inflammation. In Mus musculus (Mouse), this protein is Tumor necrosis factor ligand superfamily member 18 (Tnfsf18).